We begin with the raw amino-acid sequence, 153 residues long: Transcriptional repressor NrdR (153 aa).

A zinc finger spans residues 3–34 (CPFCNSTDTQVKDSRSIENDMLIRRRRVCLVC). One can recognise an ATP-cone domain in the interval 49–139 (FMVVKKNGET…VYMNFRNIND (91 aa)).

It belongs to the NrdR family. Requires Zn(2+) as cofactor.

In terms of biological role, negatively regulates transcription of bacterial ribonucleotide reductase nrd genes and operons by binding to NrdR-boxes. This is Transcriptional repressor NrdR from Ehrlichia chaffeensis (strain ATCC CRL-10679 / Arkansas).